The chain runs to 81 residues: Xenopsin peptides (81 aa).

A signal peptide spans 1 to 20 (MYKGIFLCVLLAVICANSLA). The propeptide occupies 21–37 (TPSSDADEDNDEVERYV). The propeptide at 65 to 73 (EAMLRSAEA) is removed in mature form by a dipeptidylpeptidase.

This sequence belongs to the gastrin/cholecystokinin family. Magainin subfamily. XPF is synthesized in the stomach and stored in a novel granular multinucleated cell in the gastric mucosa, it is stored as active, processed peptides in large granules within the granular gland secretions of the skin.

It is found in the secreted. In terms of biological role, xenopsin is a neurotensin-like octapeptide. XPF has antimicrobial activity. This chain is Xenopsin peptides, found in Xenopus laevis (African clawed frog).